Here is a 91-residue protein sequence, read N- to C-terminus: MARVTVQDAVEKIGNRFDLVLVAARRARQMQVGGKDPLVPEENDKTTVIALREIEEGLINNQILDVRERQEQQELEAAELQAVTAIAEGRR.

It belongs to the RNA polymerase subunit omega family. As to quaternary structure, the RNAP catalytic core consists of 2 alpha, 1 beta, 1 beta' and 1 omega subunit. When a sigma factor is associated with the core the holoenzyme is formed, which can initiate transcription.

The enzyme catalyses RNA(n) + a ribonucleoside 5'-triphosphate = RNA(n+1) + diphosphate. Functionally, promotes RNA polymerase assembly. Latches the N- and C-terminal regions of the beta' subunit thereby facilitating its interaction with the beta and alpha subunits. The chain is DNA-directed RNA polymerase subunit omega from Shigella flexneri.